The primary structure comprises 315 residues: Epithelial cell adhesion molecule (315 aa).

The N-terminal stretch at 1 to 23 (MAGPQALAFGLLLAVVTATLAAA) is a signal peptide. Topologically, residues 24-266 (QRDCVCDNYK…APEFSMQGLT (243 aa)) are extracellular. 6 disulfides stabilise this stretch: Cys-27–Cys-46, Cys-29–Cys-59, Cys-38–Cys-48, Cys-66–Cys-99, Cys-110–Cys-116, and Cys-118–Cys-135. The 73-residue stretch at 63-135 (ASKCLAMKAE…RTDKDTEITC (73 aa)) folds into the Thyroglobulin type-1 domain. An N-linked (GlcNAc...) asparagine glycan is attached at Asn-111. An N-linked (GlcNAc...) asparagine glycan is attached at Asn-198. The helical transmembrane segment at 267 to 289 (AGIIAVIVVVSLAVIAGIVVLVI) threads the bilayer. The Cytoplasmic segment spans residues 290–315 (STRKKSAKYEKAEIKEMGEIHRELNA).

Belongs to the EPCAM family. Monomer. Interacts with phosphorylated CLDN7. In terms of processing, glycosylation at Asn-198 is crucial for protein stability.

The protein localises to the lateral cell membrane. It localises to the cell junction. The protein resides in the tight junction. Functionally, may act as a physical homophilic interaction molecule between intestinal epithelial cells (IECs) and intraepithelial lymphocytes (IELs) at the mucosal epithelium for providing immunological barrier as a first line of defense against mucosal infection. Plays a role in embryonic stem cells proliferation and differentiation. Up-regulates the expression of FABP5, MYC and cyclins A and E. The chain is Epithelial cell adhesion molecule (Epcam) from Mus musculus (Mouse).